A 103-amino-acid polypeptide reads, in one-letter code: Large ribosomal subunit protein bL21 (103 aa).

Belongs to the bacterial ribosomal protein bL21 family. As to quaternary structure, part of the 50S ribosomal subunit. Contacts protein L20.

In terms of biological role, this protein binds to 23S rRNA in the presence of protein L20. The sequence is that of Large ribosomal subunit protein bL21 from Salmonella schwarzengrund (strain CVM19633).